A 333-amino-acid polypeptide reads, in one-letter code: Type II restriction enzyme XcyI (333 aa).

This sequence belongs to the XcyI type II restriction endonuclease family. In terms of assembly, monomer. The cofactor is Mg(2+).

It catalyses the reaction Endonucleolytic cleavage of DNA to give specific double-stranded fragments with terminal 5'-phosphates.. Functionally, a P subtype restriction enzyme that recognizes the double-stranded sequence 5'-CCCGGG-3' and cleaves after C-1. The polypeptide is Type II restriction enzyme XcyI (xcyIR) (Xanthomonas campestris pv. cyanopsidis).